A 397-amino-acid polypeptide reads, in one-letter code: MKQITILGSTGSIGTSTLSVIENNPDEFQVLALVAGKNATKMAQQCRAFQPKYAVMSDEKSAGELKQLLANTSCKTEILSGSDAVNEIAALDEADQVMSAITGVAGLKPTLAAIEKGKRILLANKESLITSGRLFFDAVAKYGAKVLPIDSEHNAIYQSLPTGIQDNLGHASLEAHGITSILLTGSGGPFRYTPLDELDAMTPDQACAHPNWSMGRKISVDSATMMNKGLEYIEARYFFNASEAEMEVIIHPQSVIHSMVRYRDGSIIAQIGEPDMRTPIAYSMAYPHRTQSGAKALDFFEIQALEFIRPDYQRYPCLALAIEASQRGQASTTVLNAANEVVVDAFLNEKVKFTDIAKINRKVVEHFDLSEPQSIDDVLEIDKLARLQTQQIIAQIV.

The NADPH site is built by T10, G11, S12, I13, G36, K37, N38, and N124. Residue K125 participates in 1-deoxy-D-xylulose 5-phosphate binding. E126 contacts NADPH. D150 contributes to the Mn(2+) binding site. Residues S151, E152, S186, and H209 each contribute to the 1-deoxy-D-xylulose 5-phosphate site. E152 is a binding site for Mn(2+). Position 215 (G215) interacts with NADPH. 1-deoxy-D-xylulose 5-phosphate-binding residues include S222, N227, K228, and E231. E231 serves as a coordination point for Mn(2+).

It belongs to the DXR family. As to quaternary structure, homodimer. It depends on Mg(2+) as a cofactor. Mn(2+) is required as a cofactor.

It carries out the reaction 2-C-methyl-D-erythritol 4-phosphate + NADP(+) = 1-deoxy-D-xylulose 5-phosphate + NADPH + H(+). It functions in the pathway isoprenoid biosynthesis; isopentenyl diphosphate biosynthesis via DXP pathway; isopentenyl diphosphate from 1-deoxy-D-xylulose 5-phosphate: step 1/6. Its function is as follows. Catalyzes the NADPH-dependent rearrangement and reduction of 1-deoxy-D-xylulose-5-phosphate (DXP) to 2-C-methyl-D-erythritol 4-phosphate (MEP). This chain is 1-deoxy-D-xylulose 5-phosphate reductoisomerase, found in Proteus mirabilis (strain HI4320).